The following is a 339-amino-acid chain: DNA-directed RNA polymerase subunit alpha (339 aa).

The tract at residues 1–233 (MVREEVAGST…DLFLPFLHAE (233 aa)) is alpha N-terminal domain (alpha-NTD). An alpha C-terminal domain (alpha-CTD) region spans residues 266-339 (GIPLNCIFID…IDLLKNKLSF (74 aa)).

Belongs to the RNA polymerase alpha chain family. As to quaternary structure, in plastids the minimal PEP RNA polymerase catalytic core is composed of four subunits: alpha, beta, beta', and beta''. When a (nuclear-encoded) sigma factor is associated with the core the holoenzyme is formed, which can initiate transcription.

Its subcellular location is the plastid. The protein localises to the chloroplast. It catalyses the reaction RNA(n) + a ribonucleoside 5'-triphosphate = RNA(n+1) + diphosphate. DNA-dependent RNA polymerase catalyzes the transcription of DNA into RNA using the four ribonucleoside triphosphates as substrates. The polypeptide is DNA-directed RNA polymerase subunit alpha (Psathyrostachys juncea (Russian wildrye)).